The chain runs to 384 residues: UDP-N-acetylglucosamine--N-acetylmuramyl-(pentapeptide) pyrophosphoryl-undecaprenol N-acetylglucosamine transferase (384 aa).

UDP-N-acetyl-alpha-D-glucosamine-binding positions include 17 to 19 (TGG), N131, R172, S200, and Q301.

Belongs to the glycosyltransferase 28 family. MurG subfamily.

It is found in the cell inner membrane. The enzyme catalyses di-trans,octa-cis-undecaprenyl diphospho-N-acetyl-alpha-D-muramoyl-L-alanyl-D-glutamyl-meso-2,6-diaminopimeloyl-D-alanyl-D-alanine + UDP-N-acetyl-alpha-D-glucosamine = di-trans,octa-cis-undecaprenyl diphospho-[N-acetyl-alpha-D-glucosaminyl-(1-&gt;4)]-N-acetyl-alpha-D-muramoyl-L-alanyl-D-glutamyl-meso-2,6-diaminopimeloyl-D-alanyl-D-alanine + UDP + H(+). It functions in the pathway cell wall biogenesis; peptidoglycan biosynthesis. Functionally, cell wall formation. Catalyzes the transfer of a GlcNAc subunit on undecaprenyl-pyrophosphoryl-MurNAc-pentapeptide (lipid intermediate I) to form undecaprenyl-pyrophosphoryl-MurNAc-(pentapeptide)GlcNAc (lipid intermediate II). This chain is UDP-N-acetylglucosamine--N-acetylmuramyl-(pentapeptide) pyrophosphoryl-undecaprenol N-acetylglucosamine transferase, found in Granulibacter bethesdensis (strain ATCC BAA-1260 / CGDNIH1).